A 292-amino-acid chain; its full sequence is Elongation factor Ts (292 aa).

The involved in Mg(2+) ion dislocation from EF-Tu stretch occupies residues T80–V83.

Belongs to the EF-Ts family.

Its subcellular location is the cytoplasm. Its function is as follows. Associates with the EF-Tu.GDP complex and induces the exchange of GDP to GTP. It remains bound to the aminoacyl-tRNA.EF-Tu.GTP complex up to the GTP hydrolysis stage on the ribosome. The sequence is that of Elongation factor Ts from Cupriavidus metallidurans (strain ATCC 43123 / DSM 2839 / NBRC 102507 / CH34) (Ralstonia metallidurans).